The chain runs to 282 residues: MKISMIFLPHFLYYTVPTFYLFGLLIMHNAAQHNYVISLTTEQKRRKHITEEFGKQNIPFEFFDAITPDIIEETAKKFNITLDRSPKAKLSDGEIGCALSHIVLWDLALENNLNYINIFEDDIHLGENAKELLEIDYISDDIHVLKLEANGKMFFKQPKSVKCDRNVYPMTVKQSGCAGYTVTAKGAKYLLELVKNKPLDVAVDSLVFEDFLHFKDYKIVQLSPGICVQDFVLHPDNPFESSLQEGRDRVHGNQRKSSILEKIKNEFGRVKIKMFGKQVPFK.

It belongs to the glycosyltransferase 25 family.

The protein is Putative glycosyltransferase HI_0765 of Haemophilus influenzae (strain ATCC 51907 / DSM 11121 / KW20 / Rd).